We begin with the raw amino-acid sequence, 266 residues long: MRLIPLTTAADVGKWAARHIVEKINAFKPSAERPFILGLPTGSSPLEAYKSLVAMHQAGLVSFKHVVTFNMDEYVGLPTDHPESYHTFMHQNFFNHIDIPRENINLLNGNAEDTTAECRRYEEKIKSYGKIHLFMGGVGNDGHIAFNEPASSLASRTRIKTLTEETRIANSRFFGGDVSLVPKFALTVGVGTLLDAEEVMILVTGRNKALALQAAVEGNVNHMWTISCLQLHAKAIMVCDEPSTMELKVKTVKYFRELETESMKNL.

The Proton acceptor; for enolization step role is filled by aspartate 72. Aspartate 141 serves as the catalytic For ring-opening step. Histidine 143 (proton acceptor; for ring-opening step) is an active-site residue. Glutamate 148 (for ring-opening step) is an active-site residue.

Belongs to the glucosamine/galactosamine-6-phosphate isomerase family. NagB subfamily. In terms of assembly, homohexamer.

The catalysed reaction is alpha-D-glucosamine 6-phosphate + H2O = beta-D-fructose 6-phosphate + NH4(+). Its pathway is amino-sugar metabolism; N-acetylneuraminate degradation; D-fructose 6-phosphate from N-acetylneuraminate: step 5/5. Its activity is regulated as follows. Allosterically activated by N-acetylglucosamine 6-phosphate (GlcNAc6P). Functionally, catalyzes the reversible isomerization-deamination of glucosamine 6-phosphate (GlcN6P) to form fructose 6-phosphate (Fru6P) and ammonium ion. This chain is Glucosamine-6-phosphate deaminase, found in Pectobacterium carotovorum subsp. carotovorum (strain PC1).